Consider the following 106-residue polypeptide: Large ribosomal subunit protein P2 (106 aa).

The interval 80-106 is disordered; the sequence is AAAAPAKKVVEEKKEESDDDMGMGLFD.

This sequence belongs to the eukaryotic ribosomal protein P1/P2 family. As to quaternary structure, P1 and P2 exist as dimers at the large ribosomal subunit. Post-translationally, phosphorylated.

Plays an important role in the elongation step of protein synthesis. This Dictyostelium discoideum (Social amoeba) protein is Large ribosomal subunit protein P2 (rplp2).